The sequence spans 201 residues: Ribosomal RNA large subunit methyltransferase E (201 aa).

Residues Gly-49, Trp-51, Asp-69, Asp-90, and Asp-113 each coordinate S-adenosyl-L-methionine. The Proton acceptor role is filled by Lys-153.

This sequence belongs to the class I-like SAM-binding methyltransferase superfamily. RNA methyltransferase RlmE family.

Its subcellular location is the cytoplasm. It carries out the reaction uridine(2552) in 23S rRNA + S-adenosyl-L-methionine = 2'-O-methyluridine(2552) in 23S rRNA + S-adenosyl-L-homocysteine + H(+). In terms of biological role, specifically methylates the uridine in position 2552 of 23S rRNA at the 2'-O position of the ribose in the fully assembled 50S ribosomal subunit. The protein is Ribosomal RNA large subunit methyltransferase E of Desulfotalea psychrophila (strain LSv54 / DSM 12343).